The sequence spans 313 residues: Leucine-rich repeat-containing protein 52 (313 aa).

An N-terminal signal peptide occupies residues 1–23 (MSLASGPGPGWLLFSFGMGLVSG). An LRRNT domain is found at 24–53 (SKCPNNCLCQAQEVICTGKQLTEYPLDIPL). The Extracellular portion of the chain corresponds to 24–244 (SKCPNNCLCQ…MCITHLDHKD (221 aa)). 2 cysteine pairs are disulfide-bonded: Cys-26–Cys-32 and Cys-30–Cys-39. LRR repeat units follow at residues 54-75 (NTRR…HLGL), 78-99 (DLVY…TFIG), 102-123 (KLIY…TFSV), 126-148 (NLVQ…TFAN), and 151-172 (SLRY…ALYH). N-linked (GlcNAc...) asparagine glycosylation is found at Asn-112 and Asn-148. The LRRCT domain occupies 184-238 (NPWKCNCSFLDFAIFLIVFHMDPSDDLNATCVEPTELTGWPITRVGNPLRYMCIT). 2 cysteine pairs are disulfide-bonded: Cys-188-Cys-214 and Cys-190-Cys-236. N-linked (GlcNAc...) asparagine glycans are attached at residues Asn-189 and Asn-211. A helical membrane pass occupies residues 245 to 265 (YIFLLLIGFCIFAAGTVAAWL). Over 266–313 (TGVCAVLYQNTRHKSSEEDEDEAGTRVEVSRRIFQTQTSSVQEFPQLI) the chain is Cytoplasmic.

May interact with KCNU1; this interaction may be required for LRRC52 stability and may change the channel gating properties. Interacts with KCNMA1. N-glycosylated. Mainly expressed in testis and skeletal muscle.

The protein resides in the cell membrane. Its function is as follows. Auxiliary protein of the large-conductance, voltage and calcium-activated potassium channel (BK alpha). Modulates gating properties by producing a marked shift in the BK channel's voltage dependence of activation in the hyperpolarizing direction, and in the absence of calcium. KCNU1 channel auxiliary protein. Modulates KCNU1 gating properties. The chain is Leucine-rich repeat-containing protein 52 (LRRC52) from Homo sapiens (Human).